Consider the following 228-residue polypeptide: Phosphoribosylformylglycinamidine synthase subunit PurQ (228 aa).

One can recognise a Glutamine amidotransferase type-1 domain in the interval 4 to 226 (AVVVFPGSNC…VNYWRETHVV (223 aa)). Residue cysteine 86 is the Nucleophile of the active site. Active-site residues include histidine 195 and glutamate 197.

Part of the FGAM synthase complex composed of 1 PurL, 1 PurQ and 2 PurS subunits.

It is found in the cytoplasm. The catalysed reaction is N(2)-formyl-N(1)-(5-phospho-beta-D-ribosyl)glycinamide + L-glutamine + ATP + H2O = 2-formamido-N(1)-(5-O-phospho-beta-D-ribosyl)acetamidine + L-glutamate + ADP + phosphate + H(+). The enzyme catalyses L-glutamine + H2O = L-glutamate + NH4(+). It participates in purine metabolism; IMP biosynthesis via de novo pathway; 5-amino-1-(5-phospho-D-ribosyl)imidazole from N(2)-formyl-N(1)-(5-phospho-D-ribosyl)glycinamide: step 1/2. Functionally, part of the phosphoribosylformylglycinamidine synthase complex involved in the purines biosynthetic pathway. Catalyzes the ATP-dependent conversion of formylglycinamide ribonucleotide (FGAR) and glutamine to yield formylglycinamidine ribonucleotide (FGAM) and glutamate. The FGAM synthase complex is composed of three subunits. PurQ produces an ammonia molecule by converting glutamine to glutamate. PurL transfers the ammonia molecule to FGAR to form FGAM in an ATP-dependent manner. PurS interacts with PurQ and PurL and is thought to assist in the transfer of the ammonia molecule from PurQ to PurL. This chain is Phosphoribosylformylglycinamidine synthase subunit PurQ, found in Geobacillus kaustophilus (strain HTA426).